The primary structure comprises 318 residues: Ribose-phosphate pyrophosphokinase 2 (318 aa).

96–101 contributes to the ATP binding site; it reads RQDKKD. Mg(2+) is bound by residues Asp-128, His-130, Asp-139, and Asp-143. His-130 contacts ATP. The tract at residues 212 to 227 is binding of phosphoribosylpyrophosphate; the sequence is KDRVAILVDDMADTCG.

This sequence belongs to the ribose-phosphate pyrophosphokinase family. In terms of assembly, homodimer. The active form is probably a hexamer composed of 3 homodimers. Requires Mg(2+) as cofactor.

It catalyses the reaction D-ribose 5-phosphate + ATP = 5-phospho-alpha-D-ribose 1-diphosphate + AMP + H(+). It functions in the pathway metabolic intermediate biosynthesis; 5-phospho-alpha-D-ribose 1-diphosphate biosynthesis; 5-phospho-alpha-D-ribose 1-diphosphate from D-ribose 5-phosphate (route I): step 1/1. Activated by magnesium and inorganic phosphate. Competitively or non-competitively inhibited by ADP, 2,3-bisphosphoglyceride or GDP. Functionally, catalyzes the synthesis of phosphoribosylpyrophosphate (PRPP) that is essential for nucleotide synthesis. This chain is Ribose-phosphate pyrophosphokinase 2 (prps2), found in Xenopus tropicalis (Western clawed frog).